The following is a 120-amino-acid chain: Aspartate 1-decarboxylase (120 aa).

Residue Ser-25 is the Schiff-base intermediate with substrate; via pyruvic acid of the active site. Ser-25 is modified (pyruvic acid (Ser)). A substrate-binding site is contributed by Thr-57. The active-site Proton donor is the Tyr-58. Residue 73-75 coordinates substrate; sequence GAA.

This sequence belongs to the PanD family. As to quaternary structure, heterooctamer of four alpha and four beta subunits. The cofactor is pyruvate. In terms of processing, is synthesized initially as an inactive proenzyme, which is activated by self-cleavage at a specific serine bond to produce a beta-subunit with a hydroxyl group at its C-terminus and an alpha-subunit with a pyruvoyl group at its N-terminus.

It is found in the cytoplasm. The enzyme catalyses L-aspartate + H(+) = beta-alanine + CO2. Its pathway is cofactor biosynthesis; (R)-pantothenate biosynthesis; beta-alanine from L-aspartate: step 1/1. Functionally, catalyzes the pyruvoyl-dependent decarboxylation of aspartate to produce beta-alanine. The polypeptide is Aspartate 1-decarboxylase (Cupriavidus necator (strain ATCC 17699 / DSM 428 / KCTC 22496 / NCIMB 10442 / H16 / Stanier 337) (Ralstonia eutropha)).